The sequence spans 339 residues: DNA-directed RNA polymerase subunit alpha (339 aa).

The alpha N-terminal domain (alpha-NTD) stretch occupies residues 1–235 (MVLQKNWQSL…DQLQLFINFD (235 aa)). The tract at residues 251-339 (FNRNLLRKVD…DLAKRLDEPF (89 aa)) is alpha C-terminal domain (alpha-CTD).

Belongs to the RNA polymerase alpha chain family. Homodimer. The RNAP catalytic core consists of 2 alpha, 1 beta, 1 beta' and 1 omega subunit. When a sigma factor is associated with the core the holoenzyme is formed, which can initiate transcription.

It catalyses the reaction RNA(n) + a ribonucleoside 5'-triphosphate = RNA(n+1) + diphosphate. Its function is as follows. DNA-dependent RNA polymerase catalyzes the transcription of DNA into RNA using the four ribonucleoside triphosphates as substrates. This Gluconacetobacter diazotrophicus (strain ATCC 49037 / DSM 5601 / CCUG 37298 / CIP 103539 / LMG 7603 / PAl5) protein is DNA-directed RNA polymerase subunit alpha.